We begin with the raw amino-acid sequence, 235 residues long: uncharacterized protein (235 aa).

Transmembrane regions (helical) follow at residues 167 to 187 (AFKLAILVTPFVETLSWLNEL) and 190 to 210 (LFAYCPAELSLSLFFLCLLLW).

The protein resides in the membrane. This is an uncharacterized protein from Saccharomyces cerevisiae (strain ATCC 204508 / S288c) (Baker's yeast).